Consider the following 1530-residue polypeptide: MHSENKLSNHGKQVTSGAQSQLPNVNQAQQQAPAGIQGSKGSVSGNHGVKANQISPGNPGLKSLNQTGGGGGMMKTKAKRERSVSIDTGDQRESLTPVLEPDAKVEGVMRSKRRCVLERKQPYSGDEWCSGAETEEEDEKPLSATHREHVMCPSQGHSGSSTTGHVSDPGGPGLGSGHGPGIRTDLHSRPPQQVVYVFTTSLANSAAEAVMHGHTDSILLYHQQNVPRTKLDQSTGVGKVSNLAEHISSSHSPPIGTPKSQSGTPRPASVGGVGHLPGTSTPSSTGHPDSEPAQTHRGGGTSSNNGRSAVHTLGLGNSGPQSVGVSGTEGVDRPGAIPHHGAGVSPSTSPSVLSALRQSELGQRVGPGNTDGLSKEQLEHRERSLQTLRDIERLLLRSGTGVAQEDPRGPNGNPNGTNVNNNNSNDGGRGLEDGEIGGGIPGNCHINNAGMPGMPPVGGMKKYEEPLQSIISQTQNLGGPGLDDSLMGPHHGMPPHSHHLSSPSGLDMGPLLGPEGVTPEQLAWRKLQEEYYQEKRRQHDMNPHQHPQHFRIMPEMGMPGGPPMLMRGPPPPYHSKPGDQQWGPGPMVGGGMGGNARMMDMNQEGPRGPRFLGQMRGPSGGGGYPESPGGVLGVEGLGPQRPPRPGMGWLEEIPPNMGGGGPFHGCCPPGGPGGPPQHFQGDLDRPMTREEIYRRIHRLDLQQMSRQQQQAGLGGPRMMDNPGGPGFPNPGMAGGPPSRGDPMDFPVSRTIMGSPIGGVGGDGGPTMRDIVDSPLGGNLNMNMGMNINQQQQLLAQKLRGGPGVLGEMLNAEDISRIRASQNGRGGANKAMIPGPEGPLQFPNQSSFPGGQVDGPYLQQPGPDMYGPDQPGPPHLSSTSRLSHIPMNTGSRVTDLGARHPPDLPISVNPMGSPAIPPSHQLKSPSLSQEPSPLMPSPSAAGLKSPSQLPQSGPTHPPLPAASGAGTPSSTSIKSPQVMGPSLGLRSPSGSPGHLKSPSMPVASPGWTASPKAAMPSPGGPPSVKVTGNGGSSSTDTGMSLPPRSSNSTPISQPSNSINPSMPFTSSPDAPPSQNPLSLIMSQMSKYAMPSSTPLYHDAIKTIATSDDEMLPDRPLQPGTNMSVGGMGNHQSAQMLLSSQGAMGPHSGPQSPMGMVLQGGPPLSHDHPGPMLPSPNPMGIPGMPSEIMGGGGGPPDGIGPCNVSPMHTQNQMGGFPRIQGPLHSPIGGMGQQFPPRPDDVLPPQQMHLLSKGMSHQRPPHQPDSFPPMPMGDGPDLSEVIRPTHRGIPEFDLSRIIPADKPSSTLQYFPKSETMSQPQQNPHQGQPPPQVSSAQLLKQLSSSGPPHSNIPSSNPHIANLQNMMAEQQLPLHPSHCGMRPGMGMPQIGSRGMGSGGGMGPMCHPGHMMGRTGMSPQQQLQQQHHHQQQQAMMANNLLQHPSHPPRGMLSPQQHPHNLIAQQNLMMMQAKQRGMALPGEHFGQQGALMSPQGPMMGPPHSQTGMMGPQSLRQRSMSLDSPLGYGPGSMANMPF.

8 disordered regions span residues 1–101 (MHSE…VLEP), 155–187 (QGHS…TDLH), 246–353 (HISS…PSVL), 398–439 (SGTG…IGGG), 473–503 (QTQN…LSSP), 821–1076 (QNGR…QNPL), 1250–1279 (KGMS…SEVI), and 1310–1331 (SETM…QVSS). Positions 8-18 (SNHGKQVTSGA) are enriched in polar residues. The segment covering 19-34 (QSQLPNVNQAQQQAPA) has biased composition (low complexity). A compositionally biased stretch (basic and acidic residues) spans 81–93 (ERSVSIDTGDQRE). Low complexity predominate over residues 156–165 (GHSGSSTTGH). The segment covering 170 to 180 (GGPGLGSGHGP) has biased composition (gly residues). Polar residues-rich tracts occupy residues 247–264 (ISSS…QSGT) and 278–287 (GTSTPSSTGH). Low complexity-rich tracts occupy residues 409 to 426 (GPNG…NSND) and 485 to 503 (SLMG…LSSP). Polar residues-rich tracts occupy residues 875–891 (LSST…TGSR), 920–930 (QLKSPSLSQEP), and 944–953 (SPSQLPQSGP). Composition is skewed to low complexity over residues 960–971 (AASGAGTPSSTS), 979–994 (GPSL…PGHL), and 1031–1060 (SSST…INPS). Over residues 1258–1268 (PHQPDSFPPMP) the composition is skewed to pro residues.

It belongs to the BCL9 family.

It is found in the nucleus. Transcriptional regulator that may act as an activator. Plays a role for mesoderm patterning in early embryogenesis. This Danio rerio (Zebrafish) protein is B-cell CLL/lymphoma 9-like protein (bcl9l).